Consider the following 169-residue polypeptide: Unfolded protein response-inducible protein 1 (169 aa).

In terms of biological role, involved in the unfolded protein response (UPR), a transcriptional response which up-regulates genes that enable cells to cope with misfolded, endoplasmic reticulum-retained proteins. UPR is part of the endoplasmic reticulum quality control (ERQC) which prevents the exit of misfolded secretory and membrane proteins from the endoplasmic reticulum. The protein is Unfolded protein response-inducible protein 1 (ULI1) of Saccharomyces cerevisiae (strain ATCC 204508 / S288c) (Baker's yeast).